Consider the following 391-residue polypeptide: Chaperone protein DnaJ (391 aa).

Positions 6 to 71 constitute a J domain; it reads CYYEVLKVER…NKRARYDQYG (66 aa). A CR-type zinc finger spans residues 137 to 215; it reads GCHKDIVFRR…CRGTGTQNEK (79 aa). Positions 150, 153, 167, 170, 189, 192, 203, and 206 each coordinate Zn(2+). CXXCXGXG motif repeat units follow at residues 150–157, 167–174, 189–196, and 203–210; these read CDTCDGSG, CTMCGGQG, CPTCKGAG, and CGKCRGTG. The interval 372–391 is disordered; the sequence is FFDPEPEEAGTGSTDTEKDS.

This sequence belongs to the DnaJ family. In terms of assembly, homodimer. It depends on Zn(2+) as a cofactor.

It is found in the cytoplasm. Its function is as follows. Participates actively in the response to hyperosmotic and heat shock by preventing the aggregation of stress-denatured proteins and by disaggregating proteins, also in an autonomous, DnaK-independent fashion. Unfolded proteins bind initially to DnaJ; upon interaction with the DnaJ-bound protein, DnaK hydrolyzes its bound ATP, resulting in the formation of a stable complex. GrpE releases ADP from DnaK; ATP binding to DnaK triggers the release of the substrate protein, thus completing the reaction cycle. Several rounds of ATP-dependent interactions between DnaJ, DnaK and GrpE are required for fully efficient folding. Also involved, together with DnaK and GrpE, in the DNA replication of plasmids through activation of initiation proteins. The chain is Chaperone protein DnaJ from Rhodopirellula baltica (strain DSM 10527 / NCIMB 13988 / SH1).